Here is a 141-residue protein sequence, read N- to C-terminus: Small ribosomal subunit protein uS12 (141 aa).

This sequence belongs to the universal ribosomal protein uS12 family. As to quaternary structure, part of the 30S ribosomal subunit.

With S4 and S5 plays an important role in translational accuracy. Located at the interface of the 30S and 50S subunits. This Methanothermobacter thermautotrophicus (strain ATCC 29096 / DSM 1053 / JCM 10044 / NBRC 100330 / Delta H) (Methanobacterium thermoautotrophicum) protein is Small ribosomal subunit protein uS12.